The primary structure comprises 154 residues: 6,7-dimethyl-8-ribityllumazine synthase (154 aa).

5-amino-6-(D-ribitylamino)uracil contacts are provided by residues phenylalanine 22, 56–58 (AFE), and 80–82 (TVI). (2S)-2-hydroxy-3-oxobutyl phosphate is bound at residue 85-86 (ST). The active-site Proton donor is the histidine 88. A 5-amino-6-(D-ribitylamino)uracil-binding site is contributed by phenylalanine 113. Arginine 127 is a (2S)-2-hydroxy-3-oxobutyl phosphate binding site.

The protein belongs to the DMRL synthase family.

The enzyme catalyses (2S)-2-hydroxy-3-oxobutyl phosphate + 5-amino-6-(D-ribitylamino)uracil = 6,7-dimethyl-8-(1-D-ribityl)lumazine + phosphate + 2 H2O + H(+). The protein operates within cofactor biosynthesis; riboflavin biosynthesis; riboflavin from 2-hydroxy-3-oxobutyl phosphate and 5-amino-6-(D-ribitylamino)uracil: step 1/2. In terms of biological role, catalyzes the formation of 6,7-dimethyl-8-ribityllumazine by condensation of 5-amino-6-(D-ribitylamino)uracil with 3,4-dihydroxy-2-butanone 4-phosphate. This is the penultimate step in the biosynthesis of riboflavin. This is 6,7-dimethyl-8-ribityllumazine synthase from Lactococcus lactis subsp. lactis (strain IL1403) (Streptococcus lactis).